A 428-amino-acid polypeptide reads, in one-letter code: Beta-1,3-galactosyl-O-glycosyl-glycoprotein beta-1,6-N-acetylglucosaminyltransferase 4 (428 aa).

The Cytoplasmic portion of the chain corresponds to 1–12 (MRRCAVLHRLRC). A helical; Signal-anchor for type II membrane protein membrane pass occupies residues 13–30 (KFYVFVVSLFVVVKLVYL). The Lumenal portion of the chain corresponds to 31-428 (KISMDNSIYI…QLQQCLRRVS (398 aa)). A glycan (N-linked (GlcNAc...) asparagine) is linked at asparagine 59. 4 disulfides stabilise this stretch: cysteine 60–cysteine 214, cysteine 148–cysteine 369, cysteine 169–cysteine 196, and cysteine 378–cysteine 410.

The protein belongs to the glycosyltransferase 14 family.

Its subcellular location is the golgi apparatus membrane. It carries out the reaction a 3-O-[beta-D-galactosyl-(1-&gt;3)-N-acetyl-alpha-D-galactosaminyl]-L-seryl-[protein] + UDP-N-acetyl-alpha-D-glucosamine = 3-O-{beta-D-galactosyl-(1-&gt;3)-[N-acetyl-beta-D-glucosaminyl-(1-&gt;6)]-N-acetyl-alpha-D-galactosaminyl}-L-seryl-[protein] + UDP + H(+). The enzyme catalyses a 3-O-[beta-D-galactosyl-(1-&gt;3)-N-acetyl-alpha-D-galactosaminyl]-L-threonyl-[protein] + UDP-N-acetyl-alpha-D-glucosamine = a 3-O-{beta-D-galactosyl-(1-&gt;3)-[N-acetyl-beta-D-glucosaminyl-(1-&gt;6)]-N-acetyl-alpha-D-galactosaminyl}-L-threonyl-[protein] + UDP + H(+). Its pathway is protein modification; protein glycosylation. Functionally, glycosyltransferase that mediates core 2 O-glycan branching, an important step in mucin-type biosynthesis. This Danio rerio (Zebrafish) protein is Beta-1,3-galactosyl-O-glycosyl-glycoprotein beta-1,6-N-acetylglucosaminyltransferase 4 (gcnt4).